We begin with the raw amino-acid sequence, 172 residues long: MKTKALFLDRDGVINIDKKYVYKIEDFEFCDGIFELCRYFLARNYLLFIATNQSGIARGYYKESDFFKLCDYMLKEFAKQDIKIDKIYHCPHLEGCECRKPKAGMLLKAKDEFDLDMKNSIFIGDNLSDMQAGLNADIGTLILVNEEKKEGDFFRQFKNLKEILNFFKEKDI.

Asp-9 functions as the Nucleophile in the catalytic mechanism. The Mg(2+) site is built by Asp-9 and Asp-11. Residues Asp-9 to Asp-11, Asp-17 to Tyr-20, and Thr-51 to Ser-54 contribute to the substrate site. Catalysis depends on Asp-11, which acts as the Proton donor. Residues Cys-90, His-92, Cys-96, and Cys-98 each coordinate Zn(2+). Arg-99–Lys-100 serves as a coordination point for substrate. Asp-125 provides a ligand contact to Mg(2+).

It belongs to the GmhB family. In terms of assembly, monomer. Mg(2+) is required as a cofactor. Zn(2+) serves as cofactor.

It is found in the cytoplasm. The enzyme catalyses D-glycero-alpha-D-manno-heptose 1,7-bisphosphate + H2O = D-glycero-alpha-D-manno-heptose 1-phosphate + phosphate. Its pathway is nucleotide-sugar biosynthesis; GDP-D-glycero-alpha-D-manno-heptose biosynthesis; GDP-D-glycero-alpha-D-manno-heptose from D-glycero-alpha-D-manno-heptose 7-phosphate: step 2/3. It participates in capsule biogenesis; capsule polysaccharide biosynthesis. It functions in the pathway nucleotide-sugar biosynthesis; ADP-L-glycero-beta-D-manno-heptose biosynthesis; ADP-L-glycero-beta-D-manno-heptose from D-glycero-beta-D-manno-heptose 7-phosphate: step 2/4. The protein operates within bacterial outer membrane biogenesis; LOS core biosynthesis. Its function is as follows. Converts the D-glycero-alpha-D-manno-heptose 1,7-bisphosphate intermediate into D-glycero-alpha-D-manno-heptose 1-phosphate by removing the phosphate group at the C-7 position. The chain is D-glycero-alpha-D-manno-heptose-1,7-bisphosphate 7-phosphatase (gmhB) from Campylobacter jejuni subsp. jejuni serotype O:2 (strain ATCC 700819 / NCTC 11168).